A 622-amino-acid polypeptide reads, in one-letter code: Signal recognition particle subunit SRP68 (622 aa).

The disordered stretch occupies residues 576 to 622 (RDATPKKAAKGSSAAAASSKTSNQEEEEQQGLTGMLSGWKKSFWGNK). The span at 585 to 595 (KGSSAAAASSK) shows a compositional bias: low complexity.

It belongs to the SRP68 family. Heterodimer with srpa-72. Srpa-68/srpa-72 heterodimer formation is stabilized by the presence of 7SL RNA. Component of a signal recognition particle (SRP) complex that consists of a 7SL RNA molecule of 300 nucleotides and six protein subunits: srpa-72, srpa-68, SRP54, F37F2.2/SRP19, F25G6.8/SRP14 and ZK512.4/SRP9. Within the SRP complex, interacts (via C-terminus) with srpa-72 (via N-terminus).

It is found in the cytoplasm. The protein localises to the nucleus. Its subcellular location is the nucleolus. It localises to the endoplasmic reticulum. Functionally, component of the signal recognition particle (SRP) complex, a ribonucleoprotein complex that mediates the cotranslational targeting of secretory and membrane proteins to the endoplasmic reticulum (ER). The SRP complex interacts with the signal sequence in nascent secretory and membrane proteins and directs them to the membrane of the ER. The SRP complex targets the ribosome-nascent chain complex to the SRP receptor (SR), which is anchored in the ER, where SR compaction and GTPase rearrangement drive cotranslational protein translocation into the ER. Binds the signal recognition particle RNA (7SL RNA), srpa-72 binds to this complex subsequently. The SRP complex possibly participates in the elongation arrest function. The sequence is that of Signal recognition particle subunit SRP68 from Caenorhabditis elegans.